The primary structure comprises 301 residues: Acetyl-coenzyme A carboxylase carboxyl transferase subunit beta (301 aa).

Residues 29-298 (LWVKCPETGQ…AEPAEEEAEP (270 aa)) enclose the CoA carboxyltransferase N-terminal domain.

The protein belongs to the AccD/PCCB family. As to quaternary structure, acetyl-CoA carboxylase is a heterohexamer composed of biotin carboxyl carrier protein (AccB), biotin carboxylase (AccC) and two subunits each of ACCase subunit alpha (AccA) and ACCase subunit beta (AccD).

Its subcellular location is the cytoplasm. It catalyses the reaction N(6)-carboxybiotinyl-L-lysyl-[protein] + acetyl-CoA = N(6)-biotinyl-L-lysyl-[protein] + malonyl-CoA. It participates in lipid metabolism; malonyl-CoA biosynthesis; malonyl-CoA from acetyl-CoA: step 1/1. Component of the acetyl coenzyme A carboxylase (ACC) complex. Biotin carboxylase (BC) catalyzes the carboxylation of biotin on its carrier protein (BCCP) and then the CO(2) group is transferred by the transcarboxylase to acetyl-CoA to form malonyl-CoA. The sequence is that of Acetyl-coenzyme A carboxylase carboxyl transferase subunit beta from Methylobacterium nodulans (strain LMG 21967 / CNCM I-2342 / ORS 2060).